Here is a 469-residue protein sequence, read N- to C-terminus: Argininosuccinate lyase (469 aa).

It belongs to the lyase 1 family. Argininosuccinate lyase subfamily.

The protein resides in the cytoplasm. It catalyses the reaction 2-(N(omega)-L-arginino)succinate = fumarate + L-arginine. It functions in the pathway amino-acid biosynthesis; L-arginine biosynthesis; L-arginine from L-ornithine and carbamoyl phosphate: step 3/3. This chain is Argininosuccinate lyase, found in Burkholderia cenocepacia (strain HI2424).